The chain runs to 67 residues: Large ribosomal subunit protein bL35 (67 aa).

This sequence belongs to the bacterial ribosomal protein bL35 family.

The sequence is that of Large ribosomal subunit protein bL35 from Agrobacterium fabrum (strain C58 / ATCC 33970) (Agrobacterium tumefaciens (strain C58)).